Here is an 85-residue protein sequence, read N- to C-terminus: Dr hemagglutinin AFA-III operon regulatory protein AfaF (85 aa).

To E.coli PapI and DaaF.

May have a possible regulatory function on the expression of the other AFA-III genes. The chain is Dr hemagglutinin AFA-III operon regulatory protein AfaF (afaF) from Escherichia coli.